A 72-amino-acid chain; its full sequence is Heat-stable enterotoxin ST-IA/ST-P (72 aa).

The N-terminal stretch at 1 to 19 (MKKLMLAIFISVLSFPSFS) is a signal peptide. Positions 20-54 (QSTESLDSSKEKITLETKKCDVVKNNSEKKSENMN) are excised as a propeptide. 3 disulfide bridges follow: cysteine 59–cysteine 64, cysteine 60–cysteine 68, and cysteine 63–cysteine 71.

It belongs to the heat-stable enterotoxin family.

Its subcellular location is the secreted. Functionally, toxin which activates the particulate form of guanylate cyclase and increases cyclic GMP levels within the host intestinal epithelial cells. This is Heat-stable enterotoxin ST-IA/ST-P (sta1) from Escherichia coli.